The chain runs to 130 residues: Small ribosomal subunit protein uS8 (130 aa).

It belongs to the universal ribosomal protein uS8 family.

The protein localises to the cytoplasm. This chain is Small ribosomal subunit protein uS8 (RPS15A), found in Brassica napus (Rape).